The sequence spans 361 residues: Putative agmatine deiminase (361 aa).

The active-site Amidino-cysteine intermediate is the Cys-354.

It belongs to the agmatine deiminase family.

The enzyme catalyses agmatine + H2O = N-carbamoylputrescine + NH4(+). The polypeptide is Putative agmatine deiminase (Streptococcus pneumoniae (strain 70585)).